The chain runs to 344 residues: N-acetyl-gamma-glutamyl-phosphate reductase (344 aa).

Cys-150 is a catalytic residue.

Belongs to the NAGSA dehydrogenase family. Type 1 subfamily.

The protein resides in the cytoplasm. The catalysed reaction is N-acetyl-L-glutamate 5-semialdehyde + phosphate + NADP(+) = N-acetyl-L-glutamyl 5-phosphate + NADPH + H(+). It participates in amino-acid biosynthesis; L-arginine biosynthesis; N(2)-acetyl-L-ornithine from L-glutamate: step 3/4. In terms of biological role, catalyzes the NADPH-dependent reduction of N-acetyl-5-glutamyl phosphate to yield N-acetyl-L-glutamate 5-semialdehyde. The polypeptide is N-acetyl-gamma-glutamyl-phosphate reductase (Pseudomonas fluorescens (strain Pf0-1)).